We begin with the raw amino-acid sequence, 67 residues long: DNA-directed RNA polymerase subunit omega (67 aa).

The protein belongs to the RNA polymerase subunit omega family. The RNAP catalytic core consists of 2 alpha, 1 beta, 1 beta' and 1 omega subunit. When a sigma factor is associated with the core the holoenzyme is formed, which can initiate transcription.

The enzyme catalyses RNA(n) + a ribonucleoside 5'-triphosphate = RNA(n+1) + diphosphate. Functionally, promotes RNA polymerase assembly. Latches the N- and C-terminal regions of the beta' subunit thereby facilitating its interaction with the beta and alpha subunits. The chain is DNA-directed RNA polymerase subunit omega from Paraburkholderia phymatum (strain DSM 17167 / CIP 108236 / LMG 21445 / STM815) (Burkholderia phymatum).